The sequence spans 148 residues: Ribonuclease H (148 aa).

Positions 1–142 (MSDSVEIYTD…ADQLANRGVD (142 aa)) constitute an RNase H type-1 domain. Mg(2+) contacts are provided by D10, E48, D70, and D134. Residues 129–148 (GNERADQLANRGVDEVRAQR) are disordered.

Belongs to the RNase H family. In terms of assembly, monomer. Requires Mg(2+) as cofactor.

The protein localises to the cytoplasm. The catalysed reaction is Endonucleolytic cleavage to 5'-phosphomonoester.. Functionally, endonuclease that specifically degrades the RNA of RNA-DNA hybrids. This chain is Ribonuclease H, found in Pseudomonas entomophila (strain L48).